Here is a 124-residue protein sequence, read N- to C-terminus: Small ribosomal subunit protein uS12 (124 aa).

A disordered region spans residues 1 to 32; it reads MPTINQLVRKGRRDKTAKVKTAALKGSPQRRG. Asp-89 bears the 3-methylthioaspartic acid mark. The disordered stretch occupies residues 104 to 124; the sequence is TQGVKGRKQARSRYGAKKEKS. The span at 108 to 118 shows a compositional bias: basic residues; that stretch reads KGRKQARSRYG.

It belongs to the universal ribosomal protein uS12 family. Part of the 30S ribosomal subunit. Contacts proteins S8 and S17. May interact with IF1 in the 30S initiation complex.

With S4 and S5 plays an important role in translational accuracy. Its function is as follows. Interacts with and stabilizes bases of the 16S rRNA that are involved in tRNA selection in the A site and with the mRNA backbone. Located at the interface of the 30S and 50S subunits, it traverses the body of the 30S subunit contacting proteins on the other side and probably holding the rRNA structure together. The combined cluster of proteins S8, S12 and S17 appears to hold together the shoulder and platform of the 30S subunit. The sequence is that of Small ribosomal subunit protein uS12 from Rhodococcus erythropolis (strain PR4 / NBRC 100887).